A 205-amino-acid chain; its full sequence is Recombination protein RecR (205 aa).

A C4-type zinc finger spans residues 64–79 (CRRCFNITVDELCPIC). Residues 87 to 182 (TKICVVEEPL…RVTRPARGLP (96 aa)) enclose the Toprim domain.

Belongs to the RecR family.

Functionally, may play a role in DNA repair. It seems to be involved in an RecBC-independent recombinational process of DNA repair. It may act with RecF and RecO. This Chloroflexus aggregans (strain MD-66 / DSM 9485) protein is Recombination protein RecR.